Consider the following 309-residue polypeptide: Oxygen-dependent coproporphyrinogen-III oxidase (309 aa).

Position 100 (Ser100) interacts with substrate. A divalent metal cation-binding residues include His104 and His114. The active-site Proton donor is His114. 116–118 (NVR) contacts substrate. His153 and His183 together coordinate a divalent metal cation. The interval 248–283 (YAEFNLVYDRGTLFGLQSGGRTESILMSLPPIVHWE) is important for dimerization. 266 to 268 (GGR) lines the substrate pocket.

Belongs to the aerobic coproporphyrinogen-III oxidase family. In terms of assembly, homodimer. It depends on a divalent metal cation as a cofactor.

The protein localises to the cytoplasm. It catalyses the reaction coproporphyrinogen III + O2 + 2 H(+) = protoporphyrinogen IX + 2 CO2 + 2 H2O. The protein operates within porphyrin-containing compound metabolism; protoporphyrin-IX biosynthesis; protoporphyrinogen-IX from coproporphyrinogen-III (O2 route): step 1/1. Involved in the heme biosynthesis. Catalyzes the aerobic oxidative decarboxylation of propionate groups of rings A and B of coproporphyrinogen-III to yield the vinyl groups in protoporphyrinogen-IX. The chain is Oxygen-dependent coproporphyrinogen-III oxidase from Legionella pneumophila (strain Lens).